We begin with the raw amino-acid sequence, 200 residues long: Protein Syd (200 aa).

This sequence belongs to the Syd family.

Its subcellular location is the cell inner membrane. Functionally, interacts with the SecY protein in vivo. May bind preferentially to an uncomplexed state of SecY, thus functioning either as a chelating agent for excess SecY in the cell or as a regulatory factor that negatively controls the translocase function. This Colwellia psychrerythraea (strain 34H / ATCC BAA-681) (Vibrio psychroerythus) protein is Protein Syd.